A 118-amino-acid polypeptide reads, in one-letter code: Small ribosomal subunit protein uS13 (118 aa).

The tract at residues 94 to 118 (SLPVHGQRTKTNARTCKGPRKPIKK) is disordered.

It belongs to the universal ribosomal protein uS13 family. As to quaternary structure, part of the 30S ribosomal subunit. Forms a loose heterodimer with protein S19. Forms two bridges to the 50S subunit in the 70S ribosome.

In terms of biological role, located at the top of the head of the 30S subunit, it contacts several helices of the 16S rRNA. In the 70S ribosome it contacts the 23S rRNA (bridge B1a) and protein L5 of the 50S subunit (bridge B1b), connecting the 2 subunits; these bridges are implicated in subunit movement. Contacts the tRNAs in the A and P-sites. This is Small ribosomal subunit protein uS13 from Buchnera aphidicola subsp. Acyrthosiphon pisum (strain 5A).